The chain runs to 1846 residues: Brefeldin A-inhibited guanine nucleotide-exchange protein 1 (1846 aa).

Positions 2 to 224 (YEGKKTKNMF…QEAKQMERER (223 aa)) are DCB; DCB:DCB domain and DCB:HUS domain interaction. Phosphoserine is present on serine 52. 3 disordered regions span residues 216-249 (EAKQ…LRYL), 264-304 (DLEP…ATAA), and 347-410 (ISAS…SPGA). Basic and acidic residues predominate over residues 264–277 (DLEPQTHDVDKSLQ). Serine 286, serine 289, and serine 290 each carry phosphoserine. Composition is skewed to polar residues over residues 348–357 (SASTEGNTGT) and 391–406 (SVSS…SSGP). 2 positions are modified to phosphoserine: serine 394 and serine 407. Positions 554-574 (ADAQSVVDIYVNYDCDLNAAN) are HUS; DCB:HUS domain interaction. The disordered stretch occupies residues 631-684 (PNSQTTLGQEKPSEQEISEVKHPETINRYGSLNSLESTSSSGIGSYSTQMSGTD). Residues 641–655 (KPSEQEISEVKHPET) show a composition bias toward basic and acidic residues. Over residues 661–681 (SLNSLESTSSSGIGSYSTQMS) the composition is skewed to low complexity. The SEC7 domain occupies 688-877 (QFEVLKQQKE…SAIYNEIAGK (190 aa)). The Nuclear localization signal (NLS) signature appears at 708–712 (KKPKR). 3 positions are modified to phosphoserine: serine 1076, serine 1563, and serine 1566.

As to quaternary structure, homodimer. Interacts with ARFGEF2/BIG2; both proteins are probably part of the same or very similar macromolecular complexes. Interacts with FKBP2. Interacts with MYO9B. Interacts with PRKAR1A and PRKAR2A. Interacts with PPP1CC. Interacts with NCL, FBL, NUP62 and U3 small nucleolar RNA. Interacts with DPY30. Interacts with PDE3A. Interacts with KANK1. Interacts with TBC1D22A and TBC1D22B. In terms of processing, phosphorylated. In vitro phosphorylated by PKA reducing its GEF activity and dephosphorylated by phosphatase PP1.

It is found in the cytoplasm. The protein resides in the perinuclear region. Its subcellular location is the golgi apparatus. It localises to the trans-Golgi network. The protein localises to the nucleus. It is found in the nucleolus. The protein resides in the nucleus matrix. Its subcellular location is the membrane. Its activity is regulated as follows. Inhibited by brefeldin A. Promotes guanine-nucleotide exchange on ARF1 and ARF3. Promotes the activation of ARF1/ARF3 through replacement of GDP with GTP. Involved in vesicular trafficking. Required for the maintenance of Golgi structure; the function may be independent of its GEF activity. Required for the maturation of integrin beta-1 in the Golgi. Involved in the establishment and persistence of cell polarity during directed cell movement in wound healing. Proposed to act as A kinase-anchoring protein (AKAP) and may mediate crosstalk between Arf and PKA pathways. Inhibits GAP activity of MYO9B probably through competitive RhoA binding. The function in the nucleus remains to be determined. This chain is Brefeldin A-inhibited guanine nucleotide-exchange protein 1 (Arfgef1), found in Mus musculus (Mouse).